We begin with the raw amino-acid sequence, 208 residues long: Small ribosomal subunit protein uS4 (208 aa).

Residues 98–158 enclose the S4 RNA-binding domain; the sequence is GRLDNVVYRM…EKSKKQARIK (61 aa).

Belongs to the universal ribosomal protein uS4 family. As to quaternary structure, part of the 30S ribosomal subunit. Contacts protein S5. The interaction surface between S4 and S5 is involved in control of translational fidelity.

Its function is as follows. One of the primary rRNA binding proteins, it binds directly to 16S rRNA where it nucleates assembly of the body of the 30S subunit. Functionally, with S5 and S12 plays an important role in translational accuracy. The polypeptide is Small ribosomal subunit protein uS4 (Actinobacillus pleuropneumoniae serotype 5b (strain L20)).